The chain runs to 322 residues: Autophagy protein 5 (322 aa).

A Glycyl lysine isopeptide (Lys-Gly) (interchain with G-Cter in atg12) cross-link involves residue K158.

The protein belongs to the ATG5 family. Conjugated with atg12. Post-translationally, conjugated to atg12; which is essential for autophagy.

Its subcellular location is the preautophagosomal structure membrane. Involved in cytoplasm to vacuole transport (Cvt) and autophagic vesicle formation. Autophagy is essential for maintenance of amino acid levels and protein synthesis under nitrogen starvation. Required for selective autophagic degradation of the nucleus (nucleophagy). Also required for mitophagy, which eliminates defective or superfluous mitochondria in order to fulfill cellular energy requirements and prevent excess ROS production. Conjugation with atg12, through a ubiquitin-like conjugating system involving atg7 as an E1-like activating enzyme and atg10 as an E2-like conjugating enzyme, is essential for its function. The atg12-atg5 conjugate acts as an E3-like enzyme which is required for lipidation of atg8 and atg8 association to the vesicle membranes. The sequence is that of Autophagy protein 5 (atg5) from Aspergillus oryzae (strain ATCC 42149 / RIB 40) (Yellow koji mold).